A 421-amino-acid chain; its full sequence is MGMTITEKILAAHAGLKAVEPGQLINAKVDLALGNDITAPLAIQEFKKLGVKKVFDPERVVLVPDHFTPAKDIKSAEQAKILRDFAREQGLTHYFEIGRMGIEHCLLPEAGLVGPGDLVIGADSHTCTYGALGAFATGVGSTDLAAAMATGELWFKVPETILFRYHGKLKPWVGGKDLILYTIGRIGVDGARYMAMEFTGEAITNLSMEGRFTMANMAIEAGGKNGIFPVDEKTVEYIRGRLQRDYRIYQSDPDARYNQEIDIDASKIEPQVALPHLPENARSVKEIGEIKIDQVVIGSCTNGRLEDLRVAAQILKGQKVHPEVRLIVIPGTQQIYAAALAEGLIATFIEAGAAVSTPTCGPCLGGHMGILAKGERALATTNRNFVGRMGHPESEVYLAGPAVAAASAVKGRIAAPEEVVK.

[4Fe-4S] cluster contacts are provided by C300, C360, and C363.

The protein belongs to the aconitase/IPM isomerase family. LeuC type 2 subfamily. Heterodimer of LeuC and LeuD. Requires [4Fe-4S] cluster as cofactor.

It catalyses the reaction (2R,3S)-3-isopropylmalate = (2S)-2-isopropylmalate. It functions in the pathway amino-acid biosynthesis; L-leucine biosynthesis; L-leucine from 3-methyl-2-oxobutanoate: step 2/4. Functionally, catalyzes the isomerization between 2-isopropylmalate and 3-isopropylmalate, via the formation of 2-isopropylmaleate. The chain is 3-isopropylmalate dehydratase large subunit from Moorella thermoacetica (strain ATCC 39073 / JCM 9320).